The chain runs to 192 residues: Adenine phosphoribosyltransferase (192 aa).

It belongs to the purine/pyrimidine phosphoribosyltransferase family. In terms of assembly, homodimer.

Its subcellular location is the cytoplasm. The enzyme catalyses AMP + diphosphate = 5-phospho-alpha-D-ribose 1-diphosphate + adenine. It participates in purine metabolism; AMP biosynthesis via salvage pathway; AMP from adenine: step 1/1. Functionally, catalyzes a salvage reaction resulting in the formation of AMP, that is energically less costly than de novo synthesis. In Corynebacterium efficiens (strain DSM 44549 / YS-314 / AJ 12310 / JCM 11189 / NBRC 100395), this protein is Adenine phosphoribosyltransferase.